Here is a 430-residue protein sequence, read N- to C-terminus: Enolase (430 aa).

Position 163 (Gln-163) interacts with (2R)-2-phosphoglycerate. The active-site Proton donor is the Glu-205. 3 residues coordinate Mg(2+): Asp-242, Glu-287, and Asp-314. Positions 339, 368, 369, and 390 each coordinate (2R)-2-phosphoglycerate. The Proton acceptor role is filled by Lys-339.

This sequence belongs to the enolase family. Mg(2+) serves as cofactor.

The protein resides in the cytoplasm. Its subcellular location is the secreted. It is found in the cell surface. It carries out the reaction (2R)-2-phosphoglycerate = phosphoenolpyruvate + H2O. It functions in the pathway carbohydrate degradation; glycolysis; pyruvate from D-glyceraldehyde 3-phosphate: step 4/5. Catalyzes the reversible conversion of 2-phosphoglycerate (2-PG) into phosphoenolpyruvate (PEP). It is essential for the degradation of carbohydrates via glycolysis. This chain is Enolase, found in Exiguobacterium sp. (strain ATCC BAA-1283 / AT1b).